We begin with the raw amino-acid sequence, 77 residues long: Large ribosomal subunit protein eL13 (77 aa).

This sequence belongs to the eukaryotic ribosomal protein eL13 family.

The sequence is that of Large ribosomal subunit protein eL13 from Sulfurisphaera tokodaii (strain DSM 16993 / JCM 10545 / NBRC 100140 / 7) (Sulfolobus tokodaii).